The chain runs to 533 residues: Putative adhesin domain-containing protein LiaX (533 aa).

Residues 1–277 are binds the antibiotic daptomycin (DAP) and the antimicrobial peptide human LL-37, under physiologically relevant concentrations. Protects the OG1RF and S613 strains from LL-37-mediated killing in a concentration-dependent manner; that stretch reads MKERERVLEL…EFNYPNPQAS (277 aa). The segment at 63–89 is disordered; sequence NALEKGESEGPTVDSFEENTQDSAEKD. A coiled-coil region spans residues 83-186; that stretch reads QDSAEKDREN…EEELKNIRKE (104 aa). The segment at 279–526 is putative adhesin region; sequence IDVKVANGTV…INASTTTGSI (248 aa). The interval 289–526 is involved in cell membrane remodeling; sequence VFKTWDQEDV…INASTTTGSI (238 aa).

May undergo proteolytic cleavage, allowing release of the N-terminal region into the extracellular environment.

It is found in the secreted. The protein resides in the cell wall. The protein localises to the cell membrane. Functionally, involved in cell membrane remodeling, perhaps acting by negative modulation of the liaFSR and liaXYZ gene clusters, thereby regulating content and localization of anionic phospholipids. Binds to the antibiotic daptomycin (DAP) and to cationic antimicrobial peptides, such as human LL-37, perhaps functioning as a sensor that activates the cell envelope stress response. The sequence is that of Putative adhesin domain-containing protein LiaX from Enterococcus faecalis (strain ATCC 700802 / V583).